The primary structure comprises 101 residues: NAD(P)H-quinone oxidoreductase subunit 4L, chloroplastic (101 aa).

The next 3 membrane-spanning stretches (helical) occupy residues 2 to 22 (ILEH…YGLI), 30 to 52 (ALMC…SDFF), and 61 to 81 (IFSI…LAIV).

The protein belongs to the complex I subunit 4L family. As to quaternary structure, NDH is composed of at least 16 different subunits, 5 of which are encoded in the nucleus.

The protein resides in the plastid. It is found in the chloroplast thylakoid membrane. It catalyses the reaction a plastoquinone + NADH + (n+1) H(+)(in) = a plastoquinol + NAD(+) + n H(+)(out). The catalysed reaction is a plastoquinone + NADPH + (n+1) H(+)(in) = a plastoquinol + NADP(+) + n H(+)(out). Its function is as follows. NDH shuttles electrons from NAD(P)H:plastoquinone, via FMN and iron-sulfur (Fe-S) centers, to quinones in the photosynthetic chain and possibly in a chloroplast respiratory chain. The immediate electron acceptor for the enzyme in this species is believed to be plastoquinone. Couples the redox reaction to proton translocation, and thus conserves the redox energy in a proton gradient. This Oenothera glazioviana (Large-flowered evening primrose) protein is NAD(P)H-quinone oxidoreductase subunit 4L, chloroplastic.